Reading from the N-terminus, the 154-residue chain is Transcriptional regulator MraZ (154 aa).

2 SpoVT-AbrB domains span residues 6 to 53 (NSEA…PENV) and 83 to 126 (VEVI…SKEI).

This sequence belongs to the MraZ family. As to quaternary structure, forms oligomers.

Its subcellular location is the cytoplasm. The protein localises to the nucleoid. The chain is Transcriptional regulator MraZ from Phocaeicola vulgatus (strain ATCC 8482 / DSM 1447 / JCM 5826 / CCUG 4940 / NBRC 14291 / NCTC 11154) (Bacteroides vulgatus).